A 407-amino-acid polypeptide reads, in one-letter code: SERPINE1 mRNA-binding protein 1 (407 aa).

The residue at position 25 (Ser25) is a Phosphoserine. Residues 33-227 (AAENKKKEAG…GSGSHNWGTV (195 aa)) form a disordered region. A compositionally biased stretch (low complexity) spans 51–68 (AKSAAQAAAQTNSNAAGK). N6-acetyllysine; alternate is present on Lys52. Residue Lys52 forms a Glycyl lysine isopeptide (Lys-Gly) (interchain with G-Cter in SUMO1); alternate linkage. Lys68 bears the N6-acetyllysine mark. Basic and acidic residues-rich tracts occupy residues 70–80 (LRKESQKDRKN), 89–114 (ADKK…RRPD), and 122–162 (KLID…ERPI). Lys102 participates in a covalent cross-link: Glycyl lysine isopeptide (Lys-Gly) (interchain with G-Cter in SUMO2). 2 positions are modified to N6-acetyllysine: Lys122 and Lys140. A compositionally biased stretch (gly residues) spans 164–182 (GRGGLGRGRGGRGRGMGRG). Arg165 and Arg188 each carry omega-N-methylarginine. Positions 183–199 (DGFDSRGKREFDRHSGS) are enriched in basic and acidic residues. Ser197, Ser199, Ser203, Ser205, and Ser208 each carry phosphoserine. The residue at position 211 (Lys211) is an N6-acetyllysine; alternate. Lys211 participates in a covalent cross-link: Glycyl lysine isopeptide (Lys-Gly) (interchain with G-Cter in SUMO2); alternate. Position 216 is an omega-N-methylarginine (Arg216). The residue at position 221 (Ser221) is a Phosphoserine. Thr226 carries the phosphothreonine modification. Lys228 participates in a covalent cross-link: Glycyl lysine isopeptide (Lys-Gly) (interchain with G-Cter in SUMO1); alternate. Lys228 participates in a covalent cross-link: Glycyl lysine isopeptide (Lys-Gly) (interchain with G-Cter in SUMO2); alternate. Phosphoserine occurs at positions 231, 234, and 237. Position 234 is a phosphothreonine (Ser234). At Lys240 the chain carries Phosphothreonine. Positions 242–256 (ISYNCSDLDQSNVTE) are enriched in polar residues. Disordered regions lie at residues 242–288 (ISYN…KEMT) and 327–407 (SKSE…PALA). Basic and acidic residues predominate over residues 261–274 (GEEHPVADTENKEN). Lys280 participates in a covalent cross-link: Glycyl lysine isopeptide (Lys-Gly) (interchain with G-Cter in SUMO2). The segment covering 327 to 341 (SKSEEAHAEDSVMDH) has biased composition (basic and acidic residues). Lys328 bears the N6-acetyllysine mark. The residue at position 329 (Ser329) is a Phosphoserine. Residues 362–371 (GRPGRGGRGG) are compositionally biased toward gly residues. Residues Arg363, Arg366, and Arg369 each carry the omega-N-methylarginine modification. Phosphoserine occurs at positions 391 and 393.

It belongs to the SERBP1-HABP4 family. Associates with mature 80S ribosomes. Interacts with EEF2/eEF2; interaction sequesters EEF2/eEF2 at the A-site of the ribosome, thereby blocking the interaction sites of the mRNA-tRNA complex, promoting ribosome stabilization and hibernation. Interacts with SPIN1. Interacts with CHD3 and TDRD3. Interacts with ZDHHC17 (via ANK repeats). In terms of processing, phosphorylation by MTOR inhibits SERBP1 and relieves ribosome hibernation.

It localises to the cytoplasm. The protein resides in the nucleus. It is found in the perinuclear region. Its function is as follows. Ribosome-binding protein that promotes ribosome hibernation, a process during which ribosomes are stabilized in an inactive state and preserved from proteasomal degradation. Acts via its association with EEF2/eEF2 factor, sequestering EEF2/eEF2 at the A-site of the ribosome and promoting ribosome stabilization and storage in an inactive state. May also play a role in the regulation of mRNA stability: binds to the 3'-most 134 nt of the SERPINE1/PAI1 mRNA, a region which confers cyclic nucleotide regulation of message decay. Seems to play a role in PML-nuclear bodies formation. This is SERPINE1 mRNA-binding protein 1 from Mus musculus (Mouse).